Reading from the N-terminus, the 120-residue chain is uncharacterized protein (120 aa).

The signal sequence occupies residues 1–27 (MPKIGVSLIVLIMLIIFLAGCNKNEQN).

This is an uncharacterized protein from Bacillus subtilis (strain 168).